Here is a 151-residue protein sequence, read N- to C-terminus: Ribosome maturation factor RimP (151 aa).

Belongs to the RimP family.

It localises to the cytoplasm. Functionally, required for maturation of 30S ribosomal subunits. The chain is Ribosome maturation factor RimP from Shewanella sp. (strain ANA-3).